The primary structure comprises 285 residues: Energy-coupling factor transporter ATP-binding protein EcfA1 (285 aa).

Residues 9-246 (VTVEHLSFTY…VSLIKNAGLD (238 aa)) form the ABC transporter domain. 43–50 (GHNGSGKS) is an ATP binding site.

It belongs to the ABC transporter superfamily. Energy-coupling factor EcfA family. As to quaternary structure, forms a stable energy-coupling factor (ECF) transporter complex composed of 2 membrane-embedded substrate-binding proteins (S component), 2 ATP-binding proteins (A component) and 2 transmembrane proteins (T component).

It is found in the cell membrane. Its function is as follows. ATP-binding (A) component of a common energy-coupling factor (ECF) ABC-transporter complex. Unlike classic ABC transporters this ECF transporter provides the energy necessary to transport a number of different substrates. This chain is Energy-coupling factor transporter ATP-binding protein EcfA1, found in Lactobacillus gasseri (strain ATCC 33323 / DSM 20243 / BCRC 14619 / CIP 102991 / JCM 1131 / KCTC 3163 / NCIMB 11718 / NCTC 13722 / AM63).